The chain runs to 205 residues: Small ribosomal subunit protein uS4 (205 aa).

The segment at 18-46 is disordered; sequence NIWGRPKSPVNSRAYGPGQHGQRRKSKVS. In terms of domain architecture, S4 RNA-binding spans 94–155; that stretch reads SRLDAVVYRA…RSRNMALVLE (62 aa).

The protein belongs to the universal ribosomal protein uS4 family. As to quaternary structure, part of the 30S ribosomal subunit. Contacts protein S5. The interaction surface between S4 and S5 is involved in control of translational fidelity.

Its function is as follows. One of the primary rRNA binding proteins, it binds directly to 16S rRNA where it nucleates assembly of the body of the 30S subunit. In terms of biological role, with S5 and S12 plays an important role in translational accuracy. The sequence is that of Small ribosomal subunit protein uS4 from Phenylobacterium zucineum (strain HLK1).